Here is a 211-residue protein sequence, read N- to C-terminus: Pyridoxine/pyridoxamine 5'-phosphate oxidase (211 aa).

Substrate-binding positions include 7–10 and Lys-65; that span reads RRDY. Residues 60 to 65, 75 to 76, Arg-81, Lys-82, and Gln-104 each bind FMN; these read RIVLLK and YT. Positions 122, 126, and 130 each coordinate substrate. Residues 139 to 140 and Trp-184 contribute to the FMN site; that span reads QS. Residue 190 to 192 coordinates substrate; that stretch reads RLH. Residue Arg-194 coordinates FMN.

The protein belongs to the pyridoxamine 5'-phosphate oxidase family. As to quaternary structure, homodimer. FMN is required as a cofactor.

It catalyses the reaction pyridoxamine 5'-phosphate + O2 + H2O = pyridoxal 5'-phosphate + H2O2 + NH4(+). The enzyme catalyses pyridoxine 5'-phosphate + O2 = pyridoxal 5'-phosphate + H2O2. It functions in the pathway cofactor metabolism; pyridoxal 5'-phosphate salvage; pyridoxal 5'-phosphate from pyridoxamine 5'-phosphate: step 1/1. It participates in cofactor metabolism; pyridoxal 5'-phosphate salvage; pyridoxal 5'-phosphate from pyridoxine 5'-phosphate: step 1/1. Functionally, catalyzes the oxidation of either pyridoxine 5'-phosphate (PNP) or pyridoxamine 5'-phosphate (PMP) into pyridoxal 5'-phosphate (PLP). The protein is Pyridoxine/pyridoxamine 5'-phosphate oxidase of Aliivibrio fischeri (strain ATCC 700601 / ES114) (Vibrio fischeri).